A 377-amino-acid chain; its full sequence is MSNSIVIIGSGFAARQLVKNIRKQDASIPLTLIAADSMDEYNKPDLSHVISQGQRADDLTRQTAGEFAEQFNLRLFPHTWVTDIDAEAHVVKSQNNQWQYDKLVLATGASAFVPPVPGRELMLTLNSQQEYRACETQLRDARRVLIVGGGLIGIELAMDFCRAGKAVTLIDNAASILASLMLPEVSSRLQHRLTEMGVHLLLKSQLQGLEKTDSGILATLDRQRSIEVDAVIAATGLRPETALARRAGLTINRGVCVDSYLQTSNADIYALGDCAEINGQVLPFLQPIQLSAMVLAKNLLGNNTPLKLPAMLVKIKTPELPLHLAGETQRQDLRWQINTERQGMVARGVDDGDQLRAFVVSEDRMKEAFGLLKTLPM.

This sequence belongs to the FAD-dependent oxidoreductase family. FAD is required as a cofactor.

The protein resides in the cytoplasm. It carries out the reaction 2 reduced [nitric oxide reductase rubredoxin domain] + NAD(+) + H(+) = 2 oxidized [nitric oxide reductase rubredoxin domain] + NADH. It functions in the pathway nitrogen metabolism; nitric oxide reduction. Functionally, one of at least two accessory proteins for anaerobic nitric oxide (NO) reductase. Reduces the rubredoxin moiety of NO reductase. The protein is Nitric oxide reductase FlRd-NAD(+) reductase of Escherichia coli O7:K1 (strain IAI39 / ExPEC).